The primary structure comprises 492 residues: Bifunctional protein GlmU (492 aa).

The segment at 1-241 (MTFRGDTAVV…SALVAGVNDR (241 aa)) is pyrophosphorylase. UDP-N-acetyl-alpha-D-glucosamine is bound by residues 12–15 (LAAG), Lys26, Gln83, and 88–89 (GT). Position 114 (Asp114) interacts with Mg(2+). The UDP-N-acetyl-alpha-D-glucosamine site is built by Gly151, Glu166, Asn181, and Asn239. Asn239 is a Mg(2+) binding site. The interval 242-262 (VQLAQLGAELNRRIVAAHQMA) is linker. Positions 263–492 (GVTVIDPATT…TPPPDADHPP (230 aa)) are N-acetyltransferase. Arg344 and Lys362 together coordinate UDP-N-acetyl-alpha-D-glucosamine. Catalysis depends on His374, which acts as the Proton acceptor. Tyr377 and Asn388 together coordinate UDP-N-acetyl-alpha-D-glucosamine. Residues Ala391, 397-398 (NY), and Ala434 each bind acetyl-CoA. A disordered region spans residues 443–492 (PPGALAVSGGPQRNIEDWVQQKRPGTPSAEAARKASAEQSTPPPDADHPP).

It in the N-terminal section; belongs to the N-acetylglucosamine-1-phosphate uridyltransferase family. The protein in the C-terminal section; belongs to the transferase hexapeptide repeat family. In terms of assembly, homotrimer. The cofactor is Mg(2+).

Its subcellular location is the cytoplasm. The enzyme catalyses alpha-D-glucosamine 1-phosphate + acetyl-CoA = N-acetyl-alpha-D-glucosamine 1-phosphate + CoA + H(+). It catalyses the reaction N-acetyl-alpha-D-glucosamine 1-phosphate + UTP + H(+) = UDP-N-acetyl-alpha-D-glucosamine + diphosphate. Its pathway is nucleotide-sugar biosynthesis; UDP-N-acetyl-alpha-D-glucosamine biosynthesis; N-acetyl-alpha-D-glucosamine 1-phosphate from alpha-D-glucosamine 6-phosphate (route II): step 2/2. The protein operates within nucleotide-sugar biosynthesis; UDP-N-acetyl-alpha-D-glucosamine biosynthesis; UDP-N-acetyl-alpha-D-glucosamine from N-acetyl-alpha-D-glucosamine 1-phosphate: step 1/1. It functions in the pathway bacterial outer membrane biogenesis; LPS lipid A biosynthesis. Its function is as follows. Catalyzes the last two sequential reactions in the de novo biosynthetic pathway for UDP-N-acetylglucosamine (UDP-GlcNAc). The C-terminal domain catalyzes the transfer of acetyl group from acetyl coenzyme A to glucosamine-1-phosphate (GlcN-1-P) to produce N-acetylglucosamine-1-phosphate (GlcNAc-1-P), which is converted into UDP-GlcNAc by the transfer of uridine 5-monophosphate (from uridine 5-triphosphate), a reaction catalyzed by the N-terminal domain. In Mycobacterium ulcerans (strain Agy99), this protein is Bifunctional protein GlmU.